We begin with the raw amino-acid sequence, 130 residues long: Secreted cysteine-rich effector 2 (130 aa).

The N-terminal stretch at 1–23 (MLINAARLLLPAAALVHLSLAWA) is a signal peptide. The segment at 68 to 85 (LKNGEDWCKHCASPRVSV) is plant immunity suppression domain.

The protein resides in the secreted. It localises to the host cell. It is found in the host periplasm. Secreted effector required for full virulence of U.virens. Inhibits host pathogen-associated molecular pattern-triggered immunity including flg22- and chitin-induced defense gene expression and oxidative burst. This Ustilaginoidea virens (Rice false smut fungus) protein is Secreted cysteine-rich effector 2.